Reading from the N-terminus, the 424-residue chain is Serine hydroxymethyltransferase 1 (424 aa).

(6S)-5,6,7,8-tetrahydrofolate contacts are provided by residues leucine 125 and 129-131 (GHL). Lysine 234 carries the N6-(pyridoxal phosphate)lysine modification.

This sequence belongs to the SHMT family. As to quaternary structure, homodimer. Pyridoxal 5'-phosphate is required as a cofactor.

The protein localises to the cytoplasm. The catalysed reaction is (6R)-5,10-methylene-5,6,7,8-tetrahydrofolate + glycine + H2O = (6S)-5,6,7,8-tetrahydrofolate + L-serine. It functions in the pathway one-carbon metabolism; tetrahydrofolate interconversion. Its pathway is amino-acid biosynthesis; glycine biosynthesis; glycine from L-serine: step 1/1. Catalyzes the reversible interconversion of serine and glycine with tetrahydrofolate (THF) serving as the one-carbon carrier. This reaction serves as the major source of one-carbon groups required for the biosynthesis of purines, thymidylate, methionine, and other important biomolecules. Also exhibits THF-independent aldolase activity toward beta-hydroxyamino acids, producing glycine and aldehydes, via a retro-aldol mechanism. This is Serine hydroxymethyltransferase 1 from Burkholderia lata (strain ATCC 17760 / DSM 23089 / LMG 22485 / NCIMB 9086 / R18194 / 383).